The sequence spans 1361 residues: MTTYSFTEKKRIRKNFSKRPTVLETPYLLSMQIDSYNDFLQQHVPMQSRAKKGLQEAFESIFPIKSHNEMVELQFVGYEFGKPEFDVRECQLRGVTYAAPLRVRMRLAIYDKNSTKKKLKQVVESESVYMGDIPLMTDDGTFVINGTERVIVSQLHRSPGVFFGDDDGQGHSSGKKLYNARIIPYRGSWLDLEFDVKDLIYCRIDRRRKLLITILLRALGLSNQEMLDIFFSKQTFKLNKTGKIELVFEPEQFAGELAQFDIIADGEVIVPMGRKISSRFVRQLIEKKVKKQTVPVDFVVGKFLATDLVDKETGELILAANSELTEELLTRFVELGVKEFQTLLINENGHGGYLADTLRLDETTTELEARAEIYRMMRPGEPPTKEAADSLFEGLFFDEARYDLSRVGRMKFNRSLGREESEGSGILSKEDIIGVVKKLIAIKDGFGSTDDIDHLGNRRIRSVGEMAENAFRIGLVRLERTVKERLAQAESEGLTPKDLINVKPVGAAVKEFFSSSQLSQFMDQNNPLSEVTHKRRISALGPGGLTRERAGFEVRDVHPTHYGRLCPIETPEGPNIGLINSLAVYARTNEYGFLETPYRKVIDGKVTDEIEYLSAIDESKYVIAQANAHLDEHGAFMDGLISTRFENEFTLMPSSRVQYMDVSPRQIVSVAASLIPFLEHDDANRALMGSNMQRQAVPTLRADKPLVGTGMERVVAMDSGVLVKAARGGVIDSVDSSRIVVKVNDDEVQAGGLGVDIYNLTKYTRSNQNTCINQKPLVSPGDIVARGDVLADGPSTDMGELALGQNVLVAFMPWNGYNYEDSILISERVSQEDRFTTIHIEELTCIARDTKLGPEEISSDIPNVKESALAKLDTTGIVYVGAEVKFGDILVGKVTPKGERSQSPEEKLLRAIFGEKASDVKDSSLRVPTGMDGTVVDVRVYTRDGIEKDERAKAIEKMEIDSIAKDIKDQLRIFSADIHDRAARLLLGQAIKKAPKRKSGDTVDQALLDETTPEQWFDFRMQDEAINEKLDAMKQLLEDKHKELQDYYEEKKAKFSQGDDLAPGVLKMVKVYLAVKRRLQPGDKMAGRHGNKGVVSLVVPVEDMPYMEDGTPVDIVLNPLGVPSRMNIGQVLELHLGWAAAGLGKRLAQMMDEGAPIKELRRYLDAVYNHNPACKKEDLDALSDEDFWQLCRNLRQGIPMATPVFDGAEEVEDLQKMLELAELPATGQTHLYDGRTGERFDREVSVGYMYMLKLHHLVDDKMHARSTGPYSLVTQQPLGGRAQFGGQRFGEMEVWALQAYGASYTLQEMLTVKSDDVDGRTKMYKNIVDGNLKIEPGLPESFNVLTKEIRALGIDIGLTQD.

It belongs to the RNA polymerase beta chain family. As to quaternary structure, the RNAP catalytic core consists of 2 alpha, 1 beta, 1 beta' and 1 omega subunit. When a sigma factor is associated with the core the holoenzyme is formed, which can initiate transcription.

It catalyses the reaction RNA(n) + a ribonucleoside 5'-triphosphate = RNA(n+1) + diphosphate. Its function is as follows. DNA-dependent RNA polymerase catalyzes the transcription of DNA into RNA using the four ribonucleoside triphosphates as substrates. The protein is DNA-directed RNA polymerase subunit beta of Dichelobacter nodosus (strain VCS1703A).